The sequence spans 194 residues: MVIPYVIEQTARGERVYDIYSRLLKDRIIFLGTPIDAQVANVVVAQLLFLDAQNPNQEIKLYINSPGGEVDAGLAIYDTMQFVRAPVSTIVIGMAASMAAVILAAGEKGRRYALPHAKVMIHQPWGGVRGTASDIAIQAQEILKAKKLLNEILAKHTGQPLEKVEKDTDRDYYLSAQEALEYGLIDQVVTREEA.

Ser-97 (nucleophile) is an active-site residue. His-122 is a catalytic residue.

Belongs to the peptidase S14 family. Fourteen ClpP subunits assemble into 2 heptameric rings which stack back to back to give a disk-like structure with a central cavity, resembling the structure of eukaryotic proteasomes.

It localises to the cytoplasm. It carries out the reaction Hydrolysis of proteins to small peptides in the presence of ATP and magnesium. alpha-casein is the usual test substrate. In the absence of ATP, only oligopeptides shorter than five residues are hydrolyzed (such as succinyl-Leu-Tyr-|-NHMec, and Leu-Tyr-Leu-|-Tyr-Trp, in which cleavage of the -Tyr-|-Leu- and -Tyr-|-Trp bonds also occurs).. In terms of biological role, cleaves peptides in various proteins in a process that requires ATP hydrolysis. Has a chymotrypsin-like activity. Plays a major role in the degradation of misfolded proteins. The protein is ATP-dependent Clp protease proteolytic subunit of Thermus thermophilus (strain ATCC BAA-163 / DSM 7039 / HB27).